Here is an 895-residue protein sequence, read N- to C-terminus: Plasma membrane ATPase 1 (895 aa).

The tract at residues 1–53 is disordered; it reads MSATEPTNEKVDKIVSDDEDEDIDQLVADLQSNPGAGDEEEEEENDSSFKAVP. Residues 1 to 92 lie on the Cytoplasmic side of the membrane; that stretch reads MSATEPTNEK…AEEQENLVLK (92 aa). Residues 7–16 show a composition bias toward basic and acidic residues; sequence TNEKVDKIVS. Residues 37–46 show a composition bias toward acidic residues; that stretch reads GDEEEEEEND. Residues 93 to 113 form a helical membrane-spanning segment; it reads FVMFFVGPIQFVMEAAAVLAA. Over 114 to 117 the chain is Extracellular; it reads GLED. Residues 118–137 form a helical membrane-spanning segment; it reads WVDFGVICALLLLNAFVGFI. The Cytoplasmic portion of the chain corresponds to 138–268; that stretch reads QEYQAGSIVD…GTGHFTEVLN (131 aa). Residues 269 to 290 form a helical membrane-spanning segment; it reads GIGTTLLVFVIVTLLVVWVACF. The Extracellular portion of the chain corresponds to 291 to 301; sequence YRTVRIVPILR. The helical transmembrane segment at 302–324 threads the bilayer; the sequence is YTLAITIIGVPVGLPAVVTTTMA. The Cytoplasmic portion of the chain corresponds to 325–696; the sequence is VGAAYLAKKQ…IAILNRSLDI (372 aa). Asp-355 acts as the 4-aspartylphosphate intermediate in catalysis. 2 residues coordinate Mg(2+): Asp-611 and Asp-615. Residues 697–715 form a helical membrane-spanning segment; sequence NLIVFIAIFADVATLAIAY. Residues 716-731 are Extracellular-facing; sequence DNAPYDPKPVKWNLPR. The helical transmembrane segment at 732–751 threads the bilayer; it reads LWGMSIVLGIILAIGTWITL. Over 752–801 the chain is Cytoplasmic; that stretch reads TTMLLPKGGIIQNFGGLDGILFLQISLTENWLIFVTRAQGPFWSSIPSWQ. Residues 802–822 form a helical membrane-spanning segment; sequence LSGAVLIVDIIATCFTLFGWW. Residues 823–834 lie on the Extracellular side of the membrane; sequence SQNWTDIVTVVR. A helical transmembrane segment spans residues 835 to 851; the sequence is TWIWSFGVFCVMGGAYY. Residues 852-895 lie on the Cytoplasmic side of the membrane; the sequence is LMSTSEAFDNFCNGRKPQQHTDKRSLEDFLVSMQRVSTQHEKST.

Belongs to the cation transport ATPase (P-type) (TC 3.A.3) family. Type IIIA subfamily.

The protein resides in the cell membrane. The enzyme catalyses ATP + H2O + H(+)(in) = ADP + phosphate + 2 H(+)(out). Its function is as follows. The plasma membrane ATPase of plants and fungi is a hydrogen ion pump. The proton gradient it generates drives the active transport of nutrients by H(+)-symport. The resulting external acidification and/or internal alkinization may mediate growth responses. This Candida albicans (Yeast) protein is Plasma membrane ATPase 1 (PMA1).